The sequence spans 1512 residues: DNA polymerase (1512 aa).

It belongs to the DNA polymerase type-B family.

It localises to the host nucleus. It catalyses the reaction DNA(n) + a 2'-deoxyribonucleoside 5'-triphosphate = DNA(n+1) + diphosphate. This is DNA polymerase (57/58) from Ictalurid herpesvirus 1 (strain Auburn) (IcHV-1).